Reading from the N-terminus, the 350-residue chain is Selenide, water dikinase (350 aa).

Residue selenocysteine 15 is part of the active site. Selenocysteine 15 is a non-standard amino acid (selenocysteine). ATP is bound by residues lysine 18 and 47 to 49 (HNE). Aspartate 50 contacts Mg(2+). ATP-binding positions include aspartate 67, aspartate 90, and 138–140 (GHS). Aspartate 90 serves as a coordination point for Mg(2+). Aspartate 227 is a binding site for Mg(2+).

This sequence belongs to the selenophosphate synthase 1 family. Class I subfamily. As to quaternary structure, homodimer. Mg(2+) is required as a cofactor.

The enzyme catalyses hydrogenselenide + ATP + H2O = selenophosphate + AMP + phosphate + 2 H(+). Synthesizes selenophosphate from selenide and ATP. The protein is Selenide, water dikinase of Nitratidesulfovibrio vulgaris (strain DSM 19637 / Miyazaki F) (Desulfovibrio vulgaris).